The following is a 105-amino-acid chain: Cyclotide vibi-E (105 aa).

An N-terminal signal peptide occupies residues 1-9 (AAFALPALA). The propeptide occupies 10–69 (SSFEKDVISFRAIQAVLEKRGLSKLEDDPVLSALAHTKTIISNPVIEEALLNGANLKAGN). Positions 70–99 (GIPCAESCVWIPCTVTALIGCGCSNKVCYN) form a cross-link, cyclopeptide (Gly-Asn). 3 disulfide bridges follow: Cys73–Cys90, Cys77–Cys92, and Cys82–Cys97. A propeptide spanning residues 100-105 (SLQTKY) is cleaved from the precursor.

This is a cyclic peptide.

Functionally, probably participates in a plant defense mechanism. Has cytotoxic activity, active against a human lymphoma cell line with an IC(50) of 3.2 uM. The protein is Cyclotide vibi-E of Viola biflora (Yellow wood violet).